Consider the following 539-residue polypeptide: MADLAAAWTRLEAAAKVAGEKRIALMFEAEPGRLAALTLNVAGLHIDLSKQAWDEAGLEAALDLAHAADVEGARTRMFGGEAINSSEGRAVLHTALRAAKDADVRAGGVPVMAEVEAVRVRMKAFTEAVRSGAIKGATGKPFKAILHIGIGGSDLGPRLLWDALRPIKPTIDLRFVANVDGAEFALTTADLDPAETLVIVVSKTFTTQETLANAAAARAWLSAALGEQGANQHLAAISTALDKTAAFGVADDRVFGFWDWVGGRYSLWSSVSLSVAVACGWEAFEGFLQGGAAMDAHFRDAPLEKNAAVLIALAQIFNRNGLDRRARSVVPYSHRLRRLASFLQQLEMESNGKSVGPDGQAVKHGTATVVFGDEGANVQHAYFQCMHQGTDITPLEFVALAQSDEGPAGMHAKLLSNVLAQAEALMVGRTIEDVRTELVAKGVSEAEIATLAPQRAFAGNRPSTMVVLDRLTPQTFGALIALYEHKTFVEGVIWGVNSFDQWGVELGKVMAGRILPELESGAAGRHDPSTAALIERLKL.

Glutamate 349 acts as the Proton donor in catalysis. Residues histidine 380 and lysine 508 contribute to the active site.

It belongs to the GPI family.

Its subcellular location is the cytoplasm. It carries out the reaction alpha-D-glucose 6-phosphate = beta-D-fructose 6-phosphate. It functions in the pathway carbohydrate biosynthesis; gluconeogenesis. The protein operates within carbohydrate degradation; glycolysis; D-glyceraldehyde 3-phosphate and glycerone phosphate from D-glucose: step 2/4. In terms of biological role, catalyzes the reversible isomerization of glucose-6-phosphate to fructose-6-phosphate. In Caulobacter sp. (strain K31), this protein is Glucose-6-phosphate isomerase.